The sequence spans 642 residues: Threonine--tRNA ligase (642 aa).

Positions 1-61 (MPIITLPDGS…EEDASLEIIT (61 aa)) constitute a TGS domain. Positions 244–535 (DHRKIGKQLD…LIEEYAGFFP (292 aa)) are catalytic. Zn(2+) is bound by residues cysteine 335, histidine 386, and histidine 512.

This sequence belongs to the class-II aminoacyl-tRNA synthetase family. In terms of assembly, homodimer. Zn(2+) serves as cofactor.

Its subcellular location is the cytoplasm. It catalyses the reaction tRNA(Thr) + L-threonine + ATP = L-threonyl-tRNA(Thr) + AMP + diphosphate + H(+). Its function is as follows. Catalyzes the attachment of threonine to tRNA(Thr) in a two-step reaction: L-threonine is first activated by ATP to form Thr-AMP and then transferred to the acceptor end of tRNA(Thr). Also edits incorrectly charged L-seryl-tRNA(Thr). This is Threonine--tRNA ligase from Vibrio parahaemolyticus serotype O3:K6 (strain RIMD 2210633).